Here is a 2541-residue protein sequence, read N- to C-terminus: Highly reducing polyketide synthase otaA (2541 aa).

The Ketosynthase family 3 (KS3) domain maps to 9–431 (SEPLAIIGLA…GTNAHVVLED (423 aa)). Active-site for beta-ketoacyl synthase activity residues include C182, H317, and H355. The Malonyl-CoA:ACP transacylase (MAT) domain maps to 571–888 (FIFTGQGANW…GSLLKRYETD (318 aa)). The N-terminal hotdog fold stretch occupies residues 957-1092 (HELLGVPVED…GSVRVETGPH (136 aa)). The tract at residues 957-1251 (HELLGVPVED…GLDLVQLPPS (295 aa)) is dehydratase (DH) domain. One can recognise a PKS/mFAS DH domain in the interval 957 to 1254 (HELLGVPVED…LVQLPPSEDA (298 aa)). Positions 1108-1254 (TESVDIAQMY…LVQLPPSEDA (147 aa)) are C-terminal hotdog fold. I1420 and E1442 together coordinate S-adenosyl-L-methionine. The methyltransferase (CMeT) domain stretch occupies residues 1433–1605 (HAQTGIKVLE…DQELRNAGLQ (173 aa)). The 304-residue stretch at 1838-2141 (HQPNGFHFVE…RQGNAGPWVL (304 aa)) folds into the Enoyl reductase (ER) domain. The Ketoreductase (KR) domain occupies 2165-2344 (ASYLLIGGFG…PATSISLGSV (180 aa)). A Carrier domain is found at 2453-2530 (DAVELVTRAI…QLAQQAAGGS (78 aa)). S2490 bears the O-(pantetheine 4'-phosphoryl)serine mark.

Requires pantetheine 4'-phosphate as cofactor.

It catalyses the reaction 4 malonyl-CoA + acetyl-CoA + 5 NADPH + 9 H(+) = 7-methylmellein + 3 CO2 + 5 NADP(+) + 5 CoA + 4 H2O. Its pathway is mycotoxin biosynthesis. Highly reducing polyketide synthase; part of the gene cluster that mediates the biosynthesis of ochratoxin A (OTA), a mycotoxin composed of a chlorinated type I polyketide dihydroisocoumarin moiety linked to L-phenylalanine, and demonstrated to have nephrotoxic, immunotoxic, genotoxic, neurotoxic, and teratogenic properties. OtaA catalyzes the condensation of one acetate and 4 malonate units to form the isocoumarin group. The pathway begins with the highly reducing polyketide synthase otaA that catalyzes the formation of the isocoumarin group during the initial stages of biosynthesis, starting from one acetate and 4 malonate units, to originate the characteristic pentaketide skeleton 7-methylmellein (7-MM) of the OTA molecule. The newly identified cyclase otaY might be involved in the polyketide cyclization reaction during the initial steps of the OTA biosynthesis. 7-MM is then oxidized into 7-carboxymellein (also called ochratoxin beta) by the cytochrome P450 monooxygenase otaC. The NRPS encoded by the otaB gene is involved in the linking of phenylalanine to the dihydroisocoumarin ring. The reaction catalyzed by NRPS results in the production of ochratoxin B (OTB), which is the non-chlorinated analog of OTA and which subsequently serves as the substrate of the halogenase otaD for chlorination activity to form the final molecular structure of OTA, containing a chlorine atom in the C-5 position of the molecule. The polypeptide is Highly reducing polyketide synthase otaA (Aspergillus carbonarius (strain ITEM 5010)).